A 341-amino-acid polypeptide reads, in one-letter code: Retinol dehydrogenase 10 (341 aa).

Residues 3–23 (IVVEFFLVTFKVLWAFVLAAA) traverse the membrane as a helical; Signal-anchor segment. 40–64 (LITGAGSGLGRLFALEFARRRALLV) contacts NADP(+). Substrate is bound at residue S197. Y210 serves as the catalytic Proton acceptor.

It belongs to the short-chain dehydrogenases/reductases (SDR) family. As to expression, detected in retina, entire eyecups and in liver (at protein level).

It localises to the microsome membrane. Its subcellular location is the endoplasmic reticulum membrane. It catalyses the reaction all-trans-retinol + NADP(+) = all-trans-retinal + NADPH + H(+). Its pathway is cofactor metabolism; retinol metabolism. Its function is as follows. Retinol dehydrogenase with a clear preference for NADP. Converts all-trans-retinol to all-trans-retinal. The protein is Retinol dehydrogenase 10 (Rdh10) of Rattus norvegicus (Rat).